The primary structure comprises 501 residues: Splicing factor 3A subunit 3 (501 aa).

Methionine 1 is modified (N-acetylmethionine). Phosphoserine is present on residues serine 54 and serine 121. The short motif at 175-179 (KERKN) is the Nuclear localization signal element. A phosphoserine mark is found at serine 295 and serine 299. The span at 343–354 (ENVQRKQARTGE) shows a compositional bias: basic and acidic residues. The interval 343 to 374 (ENVQRKQARTGEEREEEEEEQISESESEDEEN) is disordered. Residues 355 to 374 (EREEEEEEQISESESEDEEN) are compositionally biased toward acidic residues. Phosphoserine occurs at positions 365, 367, and 369. The Matrin-type zinc-finger motif lies at 406 to 437 (YNCEICGNYTYRGPKAFQRHFAEWRHAHGMRC). The residue at position 475 (threonine 475) is a Phosphothreonine.

The protein belongs to the SF3A3 family. Component of the 17S U2 SnRNP complex, a ribonucleoprotein complex that contains small nuclear RNA (snRNA) U2 and a number of specific proteins. Part of the SF3A subcomplex of the 17S U2 SnRNP complex which is composed of three subunits; SF3A3/SAP61, SF3A2/SAP62 and SF3A1/SAP114. SF3A associates with the splicing factor SF3B and a 12S RNA unit to form the mature 17S U2 small nuclear ribonucleoprotein complex (17S U2 snRNP). Identified in the spliceosome 'E' complex, a precursor of the spliceosome 'A' complex. Identified in the spliceosome 'A' and 'B' complexes. Identified in the spliceosome 'C' complex. Ubiquitous.

It is found in the nucleus speckle. The protein resides in the nucleus. Its function is as follows. Component of the 17S U2 SnRNP complex of the spliceosome, a large ribonucleoprotein complex that removes introns from transcribed pre-mRNAs. The 17S U2 SnRNP complex (1) directly participates in early spliceosome assembly and (2) mediates recognition of the intron branch site during pre-mRNA splicing by promoting the selection of the pre-mRNA branch-site adenosine, the nucleophile for the first step of splicing. Within the 17S U2 SnRNP complex, SF3A3 is part of the SF3A subcomplex that contributes to the assembly of the 17S U2 snRNP, and the subsequent assembly of the pre-spliceosome 'E' complex and the pre-catalytic spliceosome 'A' complex. Involved in pre-mRNA splicing as a component of pre-catalytic spliceosome 'B' complexes. This chain is Splicing factor 3A subunit 3 (SF3A3), found in Homo sapiens (Human).